The sequence spans 305 residues: tRNA dimethylallyltransferase (305 aa).

ATP is bound at residue 8–15; sequence GPTAVGKT. 10–15 serves as a coordination point for substrate; sequence TAVGKT. Positions 33–36 are interaction with substrate tRNA; sequence DSRQ.

It belongs to the IPP transferase family. As to quaternary structure, monomer. Mg(2+) serves as cofactor.

It carries out the reaction adenosine(37) in tRNA + dimethylallyl diphosphate = N(6)-dimethylallyladenosine(37) in tRNA + diphosphate. Functionally, catalyzes the transfer of a dimethylallyl group onto the adenine at position 37 in tRNAs that read codons beginning with uridine, leading to the formation of N6-(dimethylallyl)adenosine (i(6)A). The polypeptide is tRNA dimethylallyltransferase (Thermotoga neapolitana (strain ATCC 49049 / DSM 4359 / NBRC 107923 / NS-E)).